The primary structure comprises 435 residues: Tol-Pal system protein TolB (435 aa).

Residues 1–26 (MKTFSLLRILIVLVGMAGAFATPAMA) form the signal peptide.

This sequence belongs to the TolB family. The Tol-Pal system is composed of five core proteins: the inner membrane proteins TolA, TolQ and TolR, the periplasmic protein TolB and the outer membrane protein Pal. They form a network linking the inner and outer membranes and the peptidoglycan layer.

The protein resides in the periplasm. Part of the Tol-Pal system, which plays a role in outer membrane invagination during cell division and is important for maintaining outer membrane integrity. This chain is Tol-Pal system protein TolB, found in Allorhizobium ampelinum (strain ATCC BAA-846 / DSM 112012 / S4) (Agrobacterium vitis (strain S4)).